A 763-amino-acid polypeptide reads, in one-letter code: Autophagy-related protein 18f (763 aa).

2 WD repeats span residues 345–385 and 402–441; these read AHKS…STSR and FTNA…EGDA. Over residues 701–711 the composition is skewed to polar residues; it reads NESIQSPSTTT. Residues 701–763 form a disordered region; the sequence is NESIQSPSTT…SEDEDEEQVD (63 aa). Basic and acidic residues-rich tracts occupy residues 712–725 and 741–754; these read QDDK…HGTE and PVDK…KNHS.

It belongs to the WD repeat PROPPIN family. Component of the PI(3,5)P2 regulatory complex at least composed of ATG18, SAC/FIG4, FAB1 and VAC14. Expressed in roots, flowers and leaves.

Its subcellular location is the preautophagosomal structure membrane. The protein resides in the vacuole membrane. Functionally, the PI(3,5)P2 regulatory complex regulates both the synthesis and turnover of phosphatidylinositol 3,5-bisphosphate (PtdIns(3,5)P2). Required for autophagy. This Arabidopsis thaliana (Mouse-ear cress) protein is Autophagy-related protein 18f (ATG18F).